A 510-amino-acid chain; its full sequence is Probable cytosol aminopeptidase (510 aa).

Residues K282 and D287 each contribute to the Mn(2+) site. K294 is an active-site residue. Mn(2+) contacts are provided by D305, D364, and E366. The active site involves R368.

Belongs to the peptidase M17 family. Mn(2+) serves as cofactor.

The protein resides in the cytoplasm. The catalysed reaction is Release of an N-terminal amino acid, Xaa-|-Yaa-, in which Xaa is preferably Leu, but may be other amino acids including Pro although not Arg or Lys, and Yaa may be Pro. Amino acid amides and methyl esters are also readily hydrolyzed, but rates on arylamides are exceedingly low.. It carries out the reaction Release of an N-terminal amino acid, preferentially leucine, but not glutamic or aspartic acids.. Functionally, presumably involved in the processing and regular turnover of intracellular proteins. Catalyzes the removal of unsubstituted N-terminal amino acids from various peptides. The polypeptide is Probable cytosol aminopeptidase (Cupriavidus metallidurans (strain ATCC 43123 / DSM 2839 / NBRC 102507 / CH34) (Ralstonia metallidurans)).